The primary structure comprises 29 residues: U-limacoditoxin(12)-Dv72 (29 aa).

The first 15 residues, 1–15 (MNFGMLKLLTVLIIC), serve as a signal peptide directing secretion. Asparagine amide is present on asparagine 27.

This sequence belongs to the limacoditoxin-12 family. In terms of tissue distribution, expressed by the venom secretory cell of the spine. The spine is a cuticular structure containing a single large nucleated venom-secreting cell at its base. It is an independent unit capable of producing, storing and injecting venom. On the back of D.vulnerans caterpillars, spines are grouped together by 50 to 100 to form scoli, of which there are eight in D.vulnerans.

Its subcellular location is the secreted. In terms of biological role, probable toxin. Does not show insecticidal, antimicrobial and antiparasitic activities. Does not induce increase in intracellular calcium in mouse DRG neurons, suggesting that it does not induce pain. The polypeptide is U-limacoditoxin(12)-Dv72 (Doratifera vulnerans (Mottled cup moth)).